The chain runs to 396 residues: Putative glutamate--cysteine ligase 2-2 (396 aa).

It belongs to the glutamate--cysteine ligase type 2 family. YbdK subfamily.

It catalyses the reaction L-cysteine + L-glutamate + ATP = gamma-L-glutamyl-L-cysteine + ADP + phosphate + H(+). In terms of biological role, ATP-dependent carboxylate-amine ligase which exhibits weak glutamate--cysteine ligase activity. This Mycolicibacterium smegmatis (strain ATCC 700084 / mc(2)155) (Mycobacterium smegmatis) protein is Putative glutamate--cysteine ligase 2-2.